The primary structure comprises 787 residues: Zinc finger protein 227 (787 aa).

In terms of domain architecture, KRAB spans valine 23–serine 94. 18 consecutive C2H2-type zinc fingers follow at residues histidine 243–histidine 275, tyrosine 312–histidine 334, tyrosine 340–histidine 362, tyrosine 368–histidine 390, tyrosine 396–histidine 418, tyrosine 424–histidine 446, tyrosine 452–histidine 474, tyrosine 480–histidine 502, phenylalanine 508–histidine 530, tyrosine 536–histidine 558, tyrosine 564–histidine 586, tyrosine 592–histidine 614, tyrosine 620–histidine 642, tyrosine 648–histidine 670, tyrosine 676–histidine 698, histidine 704–histidine 726, phenylalanine 732–histidine 754, and tyrosine 760–histidine 782.

The protein belongs to the krueppel C2H2-type zinc-finger protein family.

It is found in the nucleus. In terms of biological role, may be involved in transcriptional regulation. In Bos taurus (Bovine), this protein is Zinc finger protein 227 (ZNF227).